We begin with the raw amino-acid sequence, 119 residues long: Large ribosomal subunit protein bL20 (119 aa).

It belongs to the bacterial ribosomal protein bL20 family.

Functionally, binds directly to 23S ribosomal RNA and is necessary for the in vitro assembly process of the 50S ribosomal subunit. It is not involved in the protein synthesizing functions of that subunit. The chain is Large ribosomal subunit protein bL20 from Nitrosomonas eutropha (strain DSM 101675 / C91 / Nm57).